The following is a 210-amino-acid chain: Neuroendocrine protein 7B2 (210 aa).

The signal sequence occupies residues Met-1–Ala-24. Cys-118 and Cys-128 are oxidised to a cystine. Phosphoserine is present on residues Ser-139 and Ser-203.

This sequence belongs to the 7B2 family. In terms of assembly, interacts with PCSK2/PC2 early in the secretory pathway. Dissociation occurs at later stages. In terms of processing, proteolytically cleaved in the Golgi by a furin-like convertase to generate bioactive peptides. Sulfated on tyrosine residues.

It localises to the secreted. In terms of biological role, acts as a molecular chaperone for PCSK2/PC2, preventing its premature activation in the regulated secretory pathway. Binds to inactive PCSK2 in the endoplasmic reticulum and facilitates its transport from there to later compartments of the secretory pathway where it is proteolytically matured and activated. Also required for cleavage of PCSK2 but does not appear to be involved in its folding. Plays a role in regulating pituitary hormone secretion. The C-terminal peptide inhibits PCSK2 in vitro. The sequence is that of Neuroendocrine protein 7B2 (Scg5) from Rattus norvegicus (Rat).